A 351-amino-acid chain; its full sequence is Protein MSS2, mitochondrial (351 aa).

2 TPR repeats span residues 155–188 (HLTV…ENST) and 260–294 (KECF…MDLE).

As to quaternary structure, interacts with COX18.

The protein resides in the mitochondrion inner membrane. In terms of biological role, required to stabilize mitochondrial cytochrome C oxidase subunit 2 (COX2) and to translocate the C-terminal domain of COX2 through the inner membrane. In Saccharomyces cerevisiae (strain ATCC 204508 / S288c) (Baker's yeast), this protein is Protein MSS2, mitochondrial (MSS2).